Consider the following 294-residue polypeptide: Acetylglutamate kinase (294 aa).

Residues Gly69–Gly70, Arg91, and Asn190 contribute to the substrate site.

The protein belongs to the acetylglutamate kinase family. ArgB subfamily.

It is found in the cytoplasm. It carries out the reaction N-acetyl-L-glutamate + ATP = N-acetyl-L-glutamyl 5-phosphate + ADP. It functions in the pathway amino-acid biosynthesis; L-arginine biosynthesis; N(2)-acetyl-L-ornithine from L-glutamate: step 2/4. Its function is as follows. Catalyzes the ATP-dependent phosphorylation of N-acetyl-L-glutamate. The sequence is that of Acetylglutamate kinase from Mycobacterium tuberculosis (strain CDC 1551 / Oshkosh).